The sequence spans 79 residues: MGIKKTSATVFLVIILTISFSYYDVEAESVIEPAKYGACLFLCDARRDDHACFYDCTNVAIYRTGHCVGNPPRCCCIRG.

Residues 1–27 (MGIKKTSATVFLVIILTISFSYYDVEA) form the signal peptide. 4 cysteine pairs are disulfide-bonded: C39/C76, C43/C67, C52/C74, and C56/C75.

It belongs to the DEFL family.

The protein localises to the secreted. This chain is Defensin-like protein 54, found in Arabidopsis thaliana (Mouse-ear cress).